The primary structure comprises 208 residues: Thymidylate kinase (208 aa).

11–18 (GIEGAGKT) lines the ATP pocket.

Belongs to the thymidylate kinase family.

It catalyses the reaction dTMP + ATP = dTDP + ADP. In terms of biological role, phosphorylation of dTMP to form dTDP in both de novo and salvage pathways of dTTP synthesis. In Hahella chejuensis (strain KCTC 2396), this protein is Thymidylate kinase.